The following is a 324-amino-acid chain: Aldo-keto reductase family 1 member A1 (324 aa).

S3 carries the post-translational modification Phosphoserine. Residues 10 to 19 (GQKMPLIGLG), T20, and W21 each bind NADP(+). At S37 the chain carries Phosphoserine. D44 contributes to the NADP(+) binding site. Catalysis depends on Y49, which acts as the Proton donor. N6-acetyllysine; alternate is present on K126. K126 is modified (N6-succinyllysine; alternate). K144 carries the N6-succinyllysine modification. The NADP(+) site is built by S161, N162, S210, L212, S214, S215, K262, S263, I264, T265, R268, Q271, and N272. The residue at position 210 (S210) is a Phosphoserine.

It belongs to the aldo/keto reductase family.

The protein localises to the cytoplasm. The protein resides in the cytosol. It localises to the apical cell membrane. The catalysed reaction is a primary alcohol + NADP(+) = an aldehyde + NADPH + H(+). It catalyses the reaction L-gulonate + NADP(+) = aldehydo-D-glucuronate + NADPH + H(+). It carries out the reaction L-gulono-1,4-lactone + NADP(+) = D-glucurono-3,6-lactone + NADPH + H(+). The enzyme catalyses allyl alcohol + NADP(+) = acrolein + NADPH + H(+). The catalysed reaction is glycerol + NADP(+) = D-glyceraldehyde + NADPH + H(+). It catalyses the reaction glycerol + NADP(+) = L-glyceraldehyde + NADPH + H(+). It carries out the reaction hydroxyacetone + NADP(+) = methylglyoxal + NADPH + H(+). The enzyme catalyses 3-deoxyfructose + NADP(+) = 3-deoxyglucosone + NADPH + H(+). The catalysed reaction is (R)-mevalonate + NADP(+) = (R)-mevaldate + NADPH + H(+). It catalyses the reaction S-nitroso-CoA + NADPH + H(+) = sulfinamide-CoA + NADP(+). It carries out the reaction S-nitrosoglutathione + NADPH + H(+) = S-(hydroxysulfenamide)glutathione + NADP(+). Catalyzes the NADPH-dependent reduction of a wide variety of carbonyl-containing compounds to their corresponding alcohols. Displays enzymatic activity towards endogenous metabolites such as aromatic and aliphatic aldehydes, ketones, monosaccharides and bile acids, with a preference for negatively charged substrates, such as glucuronate and succinic semialdehyde. Plays an important role by catalyzing the reduction of D-glucuronic acid and D-glucurono-gamma-lactone. Functions as a detoxifiying enzyme by reducing a range of toxic aldehydes. Reduces methylglyoxal and 3-deoxyglucosone, which are present at elevated levels under hyperglycemic conditions and are cytotoxic. Involved also in the detoxification of lipid-derived aldehydes like acrolein. Plays a role in the activation of procarcinogens, such as polycyclic aromatic hydrocarbon trans-dihydrodiols, and in the metabolism of various xenobiotics and drugs. Also acts as an inhibitor of protein S-nitrosylation by mediating degradation of S-nitroso-coenzyme A (S-nitroso-CoA), a cofactor required to S-nitrosylate proteins. S-nitroso-CoA reductase activity is involved in reprogramming intermediary metabolism in renal proximal tubules, notably by inhibiting protein S-nitrosylation of isoform 2 of PKM (PKM2). Also acts as a S-nitroso-glutathione reductase by catalyzing the NADPH-dependent reduction of S-nitrosoglutathione. Displays no reductase activity towards retinoids. The sequence is that of Aldo-keto reductase family 1 member A1 (AKR1A1) from Cricetulus griseus (Chinese hamster).